A 212-amino-acid polypeptide reads, in one-letter code: Pyridoxine/pyridoxamine 5'-phosphate oxidase (212 aa).

FMN is bound by residues 61–66 (RTVLLK), 76–77 (FT), Lys82, Lys83, and Gln105. Position 66 (Lys66) interacts with substrate. Substrate contacts are provided by Tyr123, Arg127, and Ser131. FMN-binding positions include 140 to 141 (QS) and Trp185. A substrate-binding site is contributed by 191–193 (RLH). Arg195 serves as a coordination point for FMN.

It belongs to the pyridoxamine 5'-phosphate oxidase family. In terms of assembly, homodimer. FMN is required as a cofactor.

The enzyme catalyses pyridoxamine 5'-phosphate + O2 + H2O = pyridoxal 5'-phosphate + H2O2 + NH4(+). The catalysed reaction is pyridoxine 5'-phosphate + O2 = pyridoxal 5'-phosphate + H2O2. The protein operates within cofactor metabolism; pyridoxal 5'-phosphate salvage; pyridoxal 5'-phosphate from pyridoxamine 5'-phosphate: step 1/1. Its pathway is cofactor metabolism; pyridoxal 5'-phosphate salvage; pyridoxal 5'-phosphate from pyridoxine 5'-phosphate: step 1/1. Catalyzes the oxidation of either pyridoxine 5'-phosphate (PNP) or pyridoxamine 5'-phosphate (PMP) into pyridoxal 5'-phosphate (PLP). In Vesicomyosocius okutanii subsp. Calyptogena okutanii (strain HA), this protein is Pyridoxine/pyridoxamine 5'-phosphate oxidase.